Consider the following 59-residue polypeptide: MGMRMMFTVFLLVVLATTVVPITLASATDGRNAAANARVSPVISKSSKKWCHPNPYTVG.

A signal peptide spans 1 to 25 (MGMRMMFTVFLLVVLATTVVPITLA). The propeptide occupies 26–47 (SATDGRNAAANARVSPVISKSS).

This sequence belongs to the conotoxin A superfamily. As to expression, expressed by the venom duct.

Its subcellular location is the secreted. Acts as a neurotoxin. The protein is Putative conotoxin of Conus imperialis (Imperial cone).